The chain runs to 148 residues: Ribonuclease H (148 aa).

Positions 1-142 constitute an RNase H type-1 domain; it reads MSDSVELYTD…ADQLANRGVD (142 aa). Mg(2+)-binding residues include Asp10, Glu48, Asp70, and Asp134. Residues 129–148 are disordered; sequence GNERADQLANRGVDEVRAKR.

This sequence belongs to the RNase H family. As to quaternary structure, monomer. Requires Mg(2+) as cofactor.

It localises to the cytoplasm. It catalyses the reaction Endonucleolytic cleavage to 5'-phosphomonoester.. Functionally, endonuclease that specifically degrades the RNA of RNA-DNA hybrids. This chain is Ribonuclease H, found in Pseudomonas putida (strain W619).